The following is a 525-amino-acid chain: Apolipoprotein N-acyltransferase 2 (525 aa).

The next 6 helical transmembrane spans lie at 25–45, 56–76, 81–101, 115–135, 153–173, and 200–220; these read ILNF…YYAL, FLYG…LAFF, IFTL…FGFL, FFFA…FLAY, FVDI…AACL, and LIFT…ILSI. Positions 228 to 486 constitute a CN hydrolase domain; it reads LNTVIVQQNT…AESVYTEVPV (259 aa). The Proton acceptor role is filled by E274. K339 is an active-site residue. C397 functions as the Nucleophile in the catalytic mechanism. The chain crosses the membrane as a helical span at residues 495–515; that stretch reads ASYKDWLPIMMFLILIFNIFL.

It belongs to the CN hydrolase family. Apolipoprotein N-acyltransferase subfamily.

It is found in the cell inner membrane. It catalyses the reaction N-terminal S-1,2-diacyl-sn-glyceryl-L-cysteinyl-[lipoprotein] + a glycerophospholipid = N-acyl-S-1,2-diacyl-sn-glyceryl-L-cysteinyl-[lipoprotein] + a 2-acyl-sn-glycero-3-phospholipid + H(+). The protein operates within protein modification; lipoprotein biosynthesis (N-acyl transfer). In terms of biological role, catalyzes the phospholipid dependent N-acylation of the N-terminal cysteine of apolipoprotein, the last step in lipoprotein maturation. This chain is Apolipoprotein N-acyltransferase 2, found in Treponema denticola (strain ATCC 35405 / DSM 14222 / CIP 103919 / JCM 8153 / KCTC 15104).